The following is a 95-amino-acid chain: Small ribosomal subunit protein bS20c (95 aa).

The protein belongs to the bacterial ribosomal protein bS20 family.

It localises to the plastid. It is found in the cyanelle. In terms of biological role, binds directly to 16S ribosomal RNA. The sequence is that of Small ribosomal subunit protein bS20c (rps20) from Cyanophora paradoxa.